The chain runs to 1242 residues: DNA excision repair protein ERCC-6-like (1242 aa).

S14 is modified (phosphoserine). The stretch at 21 to 54 is one TPR 1 repeat; that stretch reads YLRYVKEAKEATKNGDLEQALKLFNLAKDIFPNE. A Helicase ATP-binding domain is found at 109–277; sequence SLYRDGRRGG…WSLFDFACQG (169 aa). 122 to 129 contributes to the ATP binding site; that stretch reads DDMGLGKT. Residues 228-231 carry the DEAH box motif; sequence DEAH. Positions 466 to 626 constitute a Helicase C-terminal domain; it reads FLMDLLKKLR…PFRYFSKQEL (161 aa). S755 and S773 each carry phosphoserine. T815 is modified (phosphothreonine). Phosphoserine is present on residues S963, S989, S998, and S1021. T1055 carries the post-translational modification Phosphothreonine. 3 positions are modified to phosphoserine: S1061, S1090, and S1110. The tract at residues 1103–1181 is disordered; sequence EERLDNSSEA…LSDGQLVDSP (79 aa). Basic and acidic residues-rich tracts occupy residues 1105-1121 and 1130-1140; these read RLDN…HLEE and APEHTKEDPSR. Positions 1141–1156 are enriched in polar residues; the sequence is ETLSSENKSSQLSTSK. Phosphoserine is present on residues S1173 and S1180. Residues 1192-1225 form a TPR 2 repeat; sequence YDTLVLHGKELKECGKIQEALDCLVKALDIKSSD.

Belongs to the SNF2/RAD54 helicase family. As to quaternary structure, interacts with PLK1, which phosphorylates it. Both proteins are mutually dependent on each other for correct subcellular localization. Interacts (via N-terminal TPR repeat) with BEND3 (via BEN domains 1 and 3); the interaction is direct. In terms of processing, phosphorylation by PLK1 prevents the association with chromosome arms and restricts its localization to the kinetochore-centromere region.

Its subcellular location is the chromosome. It localises to the centromere. The protein resides in the kinetochore. It carries out the reaction ATP + H2O = ADP + phosphate + H(+). Its function is as follows. DNA helicase that acts as a tension sensor that associates with catenated DNA which is stretched under tension until it is resolved during anaphase. Functions as ATP-dependent DNA translocase. Can promote Holliday junction branch migration (in vitro). The chain is DNA excision repair protein ERCC-6-like (ERCC6L) from Bos taurus (Bovine).